The following is a 198-amino-acid chain: Probable thymidylate kinase (198 aa).

ATP is bound at residue 7 to 14 (GIDGAGKS).

It belongs to the thymidylate kinase family.

It catalyses the reaction dTMP + ATP = dTDP + ADP. In Methanocorpusculum labreanum (strain ATCC 43576 / DSM 4855 / Z), this protein is Probable thymidylate kinase.